The primary structure comprises 448 residues: Putative RNA-ligase (448 aa).

The protein belongs to the asfivirus M448R family.

It is found in the virion. This chain is Putative RNA-ligase, found in African swine fever virus (isolate Pig/Kenya/KEN-50/1950) (ASFV).